The sequence spans 537 residues: CTP synthase (537 aa).

The interval methionine 1–glycine 267 is amidoligase domain. Serine 15 contributes to the CTP binding site. Residue serine 15 participates in UTP binding. Position 16–21 (serine 16–isoleucine 21) interacts with ATP. Position 56 (tyrosine 56) interacts with L-glutamine. Residue aspartate 73 coordinates ATP. Positions 73 and 141 each coordinate Mg(2+). Residues aspartate 148–glutamate 150, lysine 188–glutamine 193, and lysine 224 each bind CTP. Residues lysine 188–glutamine 193 and lysine 224 contribute to the UTP site. The Glutamine amidotransferase type-1 domain maps to tyrosine 297–proline 535. Residue glycine 355 participates in L-glutamine binding. Cysteine 382 acts as the Nucleophile; for glutamine hydrolysis in catalysis. Residues leucine 383–glutamine 386, glutamate 406, and arginine 463 each bind L-glutamine. Active-site residues include histidine 508 and glutamate 510.

Belongs to the CTP synthase family. As to quaternary structure, homotetramer.

The catalysed reaction is UTP + L-glutamine + ATP + H2O = CTP + L-glutamate + ADP + phosphate + 2 H(+). It carries out the reaction L-glutamine + H2O = L-glutamate + NH4(+). It catalyses the reaction UTP + NH4(+) + ATP = CTP + ADP + phosphate + 2 H(+). It participates in pyrimidine metabolism; CTP biosynthesis via de novo pathway; CTP from UDP: step 2/2. Its activity is regulated as follows. Allosterically activated by GTP, when glutamine is the substrate; GTP has no effect on the reaction when ammonia is the substrate. The allosteric effector GTP functions by stabilizing the protein conformation that binds the tetrahedral intermediate(s) formed during glutamine hydrolysis. Inhibited by the product CTP, via allosteric rather than competitive inhibition. In terms of biological role, catalyzes the ATP-dependent amination of UTP to CTP with either L-glutamine or ammonia as the source of nitrogen. Regulates intracellular CTP levels through interactions with the four ribonucleotide triphosphates. This is CTP synthase from Coprothermobacter proteolyticus (strain ATCC 35245 / DSM 5265 / OCM 4 / BT).